Reading from the N-terminus, the 420-residue chain is UDP-N-acetylglucosamine 1-carboxyvinyltransferase (420 aa).

Residue 22–23 coordinates phosphoenolpyruvate; sequence KN. Arg-94 contacts UDP-N-acetyl-alpha-D-glucosamine. Residue Cys-118 is the Proton donor of the active site. Cys-118 is subject to 2-(S-cysteinyl)pyruvic acid O-phosphothioketal. UDP-N-acetyl-alpha-D-glucosamine contacts are provided by Asp-307 and Ile-329.

It belongs to the EPSP synthase family. MurA subfamily.

It is found in the cytoplasm. It carries out the reaction phosphoenolpyruvate + UDP-N-acetyl-alpha-D-glucosamine = UDP-N-acetyl-3-O-(1-carboxyvinyl)-alpha-D-glucosamine + phosphate. It participates in cell wall biogenesis; peptidoglycan biosynthesis. Functionally, cell wall formation. Adds enolpyruvyl to UDP-N-acetylglucosamine. The protein is UDP-N-acetylglucosamine 1-carboxyvinyltransferase of Granulibacter bethesdensis (strain ATCC BAA-1260 / CGDNIH1).